A 223-amino-acid polypeptide reads, in one-letter code: MKTAIIQLPGLNRDRDMVAALHHITGVEPLKIWQTESTIPDVDVIVIPGGFSYGDYLRCGAIGARTPVLQAVREKAQKGVTVIGICNGFQILLEAGLLPGTLMRNTSLKFVCREIKLEVVNVNTKFSRYYSKGQIICCPVAHHDGNYFVDSETLKQMEENEQIIFRYAENTNPNGSVNDIAGIINKAGNILGMMPHPENFIEPAHGGTDGRLFFQSALELAKG.

The 222-residue stretch at 2 to 223 (KTAIIQLPGL…FQSALELAKG (222 aa)) folds into the Glutamine amidotransferase type-1 domain. Cysteine 86 (nucleophile) is an active-site residue. Catalysis depends on residues histidine 196 and glutamate 198.

As to quaternary structure, part of the FGAM synthase complex composed of 1 PurL, 1 PurQ and 2 PurS subunits.

Its subcellular location is the cytoplasm. The enzyme catalyses N(2)-formyl-N(1)-(5-phospho-beta-D-ribosyl)glycinamide + L-glutamine + ATP + H2O = 2-formamido-N(1)-(5-O-phospho-beta-D-ribosyl)acetamidine + L-glutamate + ADP + phosphate + H(+). It carries out the reaction L-glutamine + H2O = L-glutamate + NH4(+). It participates in purine metabolism; IMP biosynthesis via de novo pathway; 5-amino-1-(5-phospho-D-ribosyl)imidazole from N(2)-formyl-N(1)-(5-phospho-D-ribosyl)glycinamide: step 1/2. In terms of biological role, part of the phosphoribosylformylglycinamidine synthase complex involved in the purines biosynthetic pathway. Catalyzes the ATP-dependent conversion of formylglycinamide ribonucleotide (FGAR) and glutamine to yield formylglycinamidine ribonucleotide (FGAM) and glutamate. The FGAM synthase complex is composed of three subunits. PurQ produces an ammonia molecule by converting glutamine to glutamate. PurL transfers the ammonia molecule to FGAR to form FGAM in an ATP-dependent manner. PurS interacts with PurQ and PurL and is thought to assist in the transfer of the ammonia molecule from PurQ to PurL. In Bartonella henselae (strain ATCC 49882 / DSM 28221 / CCUG 30454 / Houston 1) (Rochalimaea henselae), this protein is Phosphoribosylformylglycinamidine synthase subunit PurQ.